An 86-amino-acid chain; its full sequence is Small ribosomal subunit protein bS20 (86 aa).

Residues 1 to 22 (MANIKSQIKRIRTNERRRLRNQ) are disordered. Residues 7–20 (QIKRIRTNERRRLR) show a composition bias toward basic residues.

It belongs to the bacterial ribosomal protein bS20 family.

In terms of biological role, binds directly to 16S ribosomal RNA. This chain is Small ribosomal subunit protein bS20, found in Mycolicibacterium smegmatis (strain ATCC 700084 / mc(2)155) (Mycobacterium smegmatis).